The following is a 343-amino-acid chain: Holliday junction branch migration complex subunit RuvB (343 aa).

Residues 1-20 (MEEMASRMISGDPELGEPFQ) are disordered. Residues 1–185 (MEEMASRMIS…FGILARMQFY (185 aa)) are large ATPase domain (RuvB-L). Residues Leu-24, Arg-25, Gly-66, Lys-69, Thr-70, Thr-71, 132–134 (EDF), Arg-175, Tyr-185, and Arg-222 contribute to the ATP site. Thr-70 is a binding site for Mg(2+). Residues 186–256 (EPDELQQIVT…LADRALLALE (71 aa)) form a small ATPAse domain (RuvB-S) region. Residues 259-343 (RNGLDNMDHR…PRPVQQGTLL (85 aa)) form a head domain (RuvB-H) region. Residues Arg-295, Arg-314, and Arg-319 each contribute to the DNA site.

It belongs to the RuvB family. In terms of assembly, homohexamer. Forms an RuvA(8)-RuvB(12)-Holliday junction (HJ) complex. HJ DNA is sandwiched between 2 RuvA tetramers; dsDNA enters through RuvA and exits via RuvB. An RuvB hexamer assembles on each DNA strand where it exits the tetramer. Each RuvB hexamer is contacted by two RuvA subunits (via domain III) on 2 adjacent RuvB subunits; this complex drives branch migration. In the full resolvosome a probable DNA-RuvA(4)-RuvB(12)-RuvC(2) complex forms which resolves the HJ.

It localises to the cytoplasm. The catalysed reaction is ATP + H2O = ADP + phosphate + H(+). Functionally, the RuvA-RuvB-RuvC complex processes Holliday junction (HJ) DNA during genetic recombination and DNA repair, while the RuvA-RuvB complex plays an important role in the rescue of blocked DNA replication forks via replication fork reversal (RFR). RuvA specifically binds to HJ cruciform DNA, conferring on it an open structure. The RuvB hexamer acts as an ATP-dependent pump, pulling dsDNA into and through the RuvAB complex. RuvB forms 2 homohexamers on either side of HJ DNA bound by 1 or 2 RuvA tetramers; 4 subunits per hexamer contact DNA at a time. Coordinated motions by a converter formed by DNA-disengaged RuvB subunits stimulates ATP hydrolysis and nucleotide exchange. Immobilization of the converter enables RuvB to convert the ATP-contained energy into a lever motion, pulling 2 nucleotides of DNA out of the RuvA tetramer per ATP hydrolyzed, thus driving DNA branch migration. The RuvB motors rotate together with the DNA substrate, which together with the progressing nucleotide cycle form the mechanistic basis for DNA recombination by continuous HJ branch migration. Branch migration allows RuvC to scan DNA until it finds its consensus sequence, where it cleaves and resolves cruciform DNA. This chain is Holliday junction branch migration complex subunit RuvB, found in Magnetococcus marinus (strain ATCC BAA-1437 / JCM 17883 / MC-1).